A 302-amino-acid polypeptide reads, in one-letter code: Lysosomal thioesterase PPT2 (302 aa).

The signal sequence occupies residues 1-27 (MPGLWRQRLPSAWALLLLPFLPLLLPA). Asparagine 60 carries N-linked (GlcNAc...) asparagine glycosylation. Cystine bridges form between cysteine 109–cysteine 117 and cysteine 165–cysteine 176. Serine 111 acts as the Nucleophile in catalysis. N-linked (GlcNAc...) asparagine glycosylation is found at asparagine 190 and asparagine 206. Residue aspartate 228 is part of the active site. The N-linked (GlcNAc...) asparagine glycan is linked to asparagine 245. Residues cysteine 276 and cysteine 296 are joined by a disulfide bond. The active site involves histidine 283. Asparagine 289 carries an N-linked (GlcNAc...) asparagine glycan.

It belongs to the palmitoyl-protein thioesterase family.

The protein localises to the lysosome. It catalyses the reaction hexadecanoyl-CoA + H2O = hexadecanoate + CoA + H(+). The enzyme catalyses S-hexadecanoyl-N-acetylcysteamine + H2O = N-acetylcysteamine + hexadecanoate + H(+). In terms of biological role, catalyzes the cleavage of thioester bonds from S-palmitoyl-CoA or S-palmitoyl-N-acetylcysteamine (unbranched structures) but does not have activity against palmitoylcysteine or palmitoylated proteins, branched structures or bulky head groups. Conversely, hydrolyzes both long and short chain fatty acyl-CoA substrate. The chain is Lysosomal thioesterase PPT2 (Ppt2) from Rattus norvegicus (Rat).